Here is a 240-residue protein sequence, read N- to C-terminus: Zinc finger CCCH domain-containing protein 52 (240 aa).

Disordered stretches follow at residues 1 to 37 and 81 to 106; these read MDARKRGRPEAAASHNSNGGFKRSKQEMESISTGLGS and SQVSRNMQGSGGPGGRFSGRGDPGSG. Residues 36–64 form a C3H1-type 1 zinc finger; sequence GSKSKPCTKFFSTSGCPFGDNCHFLHYVP. Residues 89–104 are compositionally biased toward gly residues; the sequence is GSGGPGGRFSGRGDPG. The KH domain occupies 113-177; that stretch reads ASTSKISVDA…EQINVASGMV (65 aa). A C3H1-type 2 zinc finger spans residues 205–232; it reads NYKTKICDRYSKGNCTYGDRCHFAHGES.

This chain is Zinc finger CCCH domain-containing protein 52, found in Arabidopsis thaliana (Mouse-ear cress).